Here is a 229-residue protein sequence, read N- to C-terminus: Large ribosomal subunit protein uL1 (229 aa).

It belongs to the universal ribosomal protein uL1 family. Part of the 50S ribosomal subunit.

Functionally, binds directly to 23S rRNA. The L1 stalk is quite mobile in the ribosome, and is involved in E site tRNA release. Its function is as follows. Protein L1 is also a translational repressor protein, it controls the translation of the L11 operon by binding to its mRNA. The protein is Large ribosomal subunit protein uL1 of Streptococcus equi subsp. equi (strain 4047).